Consider the following 151-residue polypeptide: Small ribosomal subunit protein uS15 (151 aa).

Belongs to the universal ribosomal protein uS15 family.

This Anopheles gambiae (African malaria mosquito) protein is Small ribosomal subunit protein uS15 (RpS13).